We begin with the raw amino-acid sequence, 244 residues long: tRNA (guanine-N(7)-)-methyltransferase (244 aa).

The S-adenosyl-L-methionine site is built by E42, D67, D94, and D116. The active site involves D116. Substrate-binding positions include K120, D150, and 191–194 (TYYE).

The protein belongs to the class I-like SAM-binding methyltransferase superfamily. TrmB family.

The catalysed reaction is guanosine(46) in tRNA + S-adenosyl-L-methionine = N(7)-methylguanosine(46) in tRNA + S-adenosyl-L-homocysteine. It participates in tRNA modification; N(7)-methylguanine-tRNA biosynthesis. In terms of biological role, catalyzes the formation of N(7)-methylguanine at position 46 (m7G46) in tRNA. The sequence is that of tRNA (guanine-N(7)-)-methyltransferase from Porphyromonas gingivalis (strain ATCC BAA-308 / W83).